A 193-amino-acid polypeptide reads, in one-letter code: Ancillary SecYEG translocon subunit (193 aa).

Over 1–11 (MIKNSYINEKL) the chain is Cytoplasmic. Residues 12-34 (NFYQKSFLTCMLLIVIVIVYFFS) form a helical membrane-spanning segment. At 35-193 (KNYLDKPKNS…IIQMKINNYN (159 aa)) the chain is on the extracellular side.

The protein belongs to the YfgM family. Interacts with the Sec translocon. Forms a complex with PpiD.

The protein resides in the cell membrane. May mediate protein transfer from the Sec translocon to the chaperone network via its extracellular C-terminal region. The sequence is that of Ancillary SecYEG translocon subunit from Buchnera aphidicola subsp. Baizongia pistaciae (strain Bp).